A 302-amino-acid chain; its full sequence is Glutaminase (302 aa).

Residues Ser61, Asn111, Glu155, Asn162, Tyr186, Tyr238, and Val256 each contribute to the substrate site.

It belongs to the glutaminase family. Homotetramer.

It catalyses the reaction L-glutamine + H2O = L-glutamate + NH4(+). The polypeptide is Glutaminase (Pseudomonas aeruginosa (strain LESB58)).